Here is a 269-residue protein sequence, read N- to C-terminus: Protein shisa-1 (269 aa).

A signal peptide spans 1–18; it reads MEFIVLLTVCALLGLSCG. Topologically, residues 19 to 98 are extracellular; it reads QHGEYCHGWT…LPPTVPTYFP (80 aa). Residues 99–119 traverse the membrane as a helical segment; sequence FLLVGSIFVSFVILGSLVGLC. Residues 120–269 lie on the Cytoplasmic side of the membrane; that stretch reads CCKCLKPEDD…TVCSGSPSKC (150 aa). A disordered region spans residues 129–167; that stretch reads DTQVSGPAPIQSRLLDQDPSTDTSRHSSSSSASMPRPPI. Positions 146-162 are enriched in low complexity; sequence DPSTDTSRHSSSSSASM.

It belongs to the shisa family. Interacts with immature forms of fzd8 and fgfr.

The protein localises to the endoplasmic reticulum. It is found in the membrane. Its function is as follows. Required for head formation during gastrulation. Functions as an inhibitor for the caudalizing signals wnt and fgf, does not inhibit bmp, activin and nodal signaling in head formation process. Induces retention of fzd8 in the endoplasmic reticulum and inhibits trafficking of fzd8 to the cell surface. This Xenopus laevis (African clawed frog) protein is Protein shisa-1 (shisa1).